Reading from the N-terminus, the 29-residue chain is Cytochrome b6-f complex subunit 8 (29 aa).

Residues 3-23 (IISIGWVSLMVVFTFSISLVV) traverse the membrane as a helical segment.

It belongs to the PetN family. The 4 large subunits of the cytochrome b6-f complex are cytochrome b6, subunit IV (17 kDa polypeptide, PetD), cytochrome f and the Rieske protein, while the 4 small subunits are PetG, PetL, PetM and PetN. The complex functions as a dimer.

The protein localises to the plastid. It is found in the chloroplast thylakoid membrane. Component of the cytochrome b6-f complex, which mediates electron transfer between photosystem II (PSII) and photosystem I (PSI), cyclic electron flow around PSI, and state transitions. In Staurastrum punctulatum (Green alga), this protein is Cytochrome b6-f complex subunit 8.